We begin with the raw amino-acid sequence, 335 residues long: Glycerol-3-phosphate dehydrogenase [NAD(P)+] (335 aa).

Lys109 serves as a coordination point for NADPH. Sn-glycerol 3-phosphate contacts are provided by Lys109, Gly141, and Ser143. Residue Ala145 coordinates NADPH. 5 residues coordinate sn-glycerol 3-phosphate: Lys196, Asp249, Ser259, Arg260, and Asn261. Lys196 acts as the Proton acceptor in catalysis. Position 260 (Arg260) interacts with NADPH. Residue Glu283 coordinates NADPH.

Belongs to the NAD-dependent glycerol-3-phosphate dehydrogenase family.

It is found in the cytoplasm. The enzyme catalyses sn-glycerol 3-phosphate + NAD(+) = dihydroxyacetone phosphate + NADH + H(+). It catalyses the reaction sn-glycerol 3-phosphate + NADP(+) = dihydroxyacetone phosphate + NADPH + H(+). It functions in the pathway membrane lipid metabolism; glycerophospholipid metabolism. In terms of biological role, catalyzes the reduction of the glycolytic intermediate dihydroxyacetone phosphate (DHAP) to sn-glycerol 3-phosphate (G3P), the key precursor for phospholipid synthesis. The protein is Glycerol-3-phosphate dehydrogenase [NAD(P)+] of Mycoplasma mobile (strain ATCC 43663 / 163K / NCTC 11711) (Mesomycoplasma mobile).